The chain runs to 433 residues: MEPKEKKQKLDTSEVASPSLSKTHLKKKKTKKQKIRKSQEITSPSLSKNTDLVIASPSLSNIDVGEAMKKQNDVAIFLTGIVISSVAKNSNFVFSPASINAALTMVAASSGGEQGEELRSFILSFLKSSSTDELNAIFREIASVVLVDGSKKGGPKIAVVNGMWMDQSLSVNPLSKDLFKNFFSAAFAQVDFRSKAEEVRTEVNAWASSHTNGLIKDLLPRGSVTSLTDRVYGSALYFKGTWEEKYSKSMTKCKPFYLLNGTSVSVPFMSSFEKQYIAAYDGFKVLRLPYRQGRDNTNRNFAMYIYLPDKKGELDDLLERMTSTPGFLDSHNPERRVKVGKFRIPKFKIEFGFEASSAFSDFELDVSFYQKTLIEIDEKGTEAVTFTAFRSAYLGCALVKPIDFVADHPFLFLIREEQTGTVLFAGQIFDPSA.

Over residues 1–12 (MEPKEKKQKLDT) the composition is skewed to basic and acidic residues. The interval 1–43 (MEPKEKKQKLDTSEVASPSLSKTHLKKKKTKKQKIRKSQEITS) is disordered. Basic residues predominate over residues 23 to 36 (THLKKKKTKKQKIR). The segment at 380-404 (GTEAVTFTAFRSAYLGCALVKPIDF) is RCL.

Belongs to the serpin family. Weakly expressed during seedling development.

The sequence is that of Probable non-inhibitory serpin-Z5 from Arabidopsis thaliana (Mouse-ear cress).